Here is a 234-residue protein sequence, read N- to C-terminus: Arsenate respiratory reductase iron-sulfur subunit ArrB (234 aa).

3 consecutive 4Fe-4S ferredoxin-type domains span residues 3–32 (LGMV…NDGI), 48–79 (VKYT…KDKR), and 80–109 (GLTL…FNAA). Cys12, Cys15, Cys18, Cys22, Cys57, Cys60, Cys65, Cys69, Cys89, Cys92, Cys95, Cys99, Cys164, Cys167, Cys179, and Cys183 together coordinate [4Fe-4S] cluster.

In terms of assembly, heterodimer composed of one large subunit (ArrA) and one small subunit (ArrB). [4Fe-4S] cluster is required as a cofactor.

It is found in the periplasm. Phosphate is a competitive inhibitor. In terms of biological role, component of the arsenate respiratory reductase (Arr) complex, which catalyzes the reduction of arsenate (As(V)) to arsenite (As(III)). ArrB is probably the electron transfer subunit. The periplasmic localization of this complex may allow the cell to couple arsenate reduction to energy production before arsenate can be transported to the cell cytoplasm and enter the ars detoxification pathway, an energy-requiring process. In Shewanella sp. (strain ANA-3), this protein is Arsenate respiratory reductase iron-sulfur subunit ArrB.